Consider the following 537-residue polypeptide: Chaperonin GroEL (537 aa).

Residues 31–34 (TLGP), 87–91 (DGTTT), G415, and D495 contribute to the ATP site.

The protein belongs to the chaperonin (HSP60) family. As to quaternary structure, forms a cylinder of 14 subunits composed of two heptameric rings stacked back-to-back. Interacts with the co-chaperonin GroES.

Its subcellular location is the cytoplasm. It carries out the reaction ATP + H2O + a folded polypeptide = ADP + phosphate + an unfolded polypeptide.. Together with its co-chaperonin GroES, plays an essential role in assisting protein folding. The GroEL-GroES system forms a nano-cage that allows encapsulation of the non-native substrate proteins and provides a physical environment optimized to promote and accelerate protein folding. In Methanoregula boonei (strain DSM 21154 / JCM 14090 / 6A8), this protein is Chaperonin GroEL.